A 323-amino-acid chain; its full sequence is Cytoskeleton protein RodZ (323 aa).

The Cytoplasmic portion of the chain corresponds to 1-111 (MNTEASQDKT…LGKRRKKRDG (111 aa)). An HTH cro/C1-type domain is found at 19-71 (LRQAREQLGLSQQAVAERLCLKMSTVRDIEEDNLSADLASTFVRGYIRSYAKL). The segment at residues 30–49 (QQAVAERLCLKMSTVRDIEE) is a DNA-binding region (H-T-H motif). Residues 112-132 (WLMSFTWLIVFVVVGLTGAWW) form a helical; Signal-anchor for type II membrane protein membrane-spanning segment. The Periplasmic segment spans residues 133 to 323 (WQNHKAQQEE…RVARLTVAAQ (191 aa)). Polar residues-rich tracts occupy residues 149 to 172 (QSSA…NADN) and 179 to 214 (NGST…SPSQ). The interval 149 to 236 (QSSAQLSQNN…APLPTADAGV (88 aa)) is disordered. Residues 215–234 (TTLPETTPAAPTAPLPTADA) show a composition bias toward low complexity.

Belongs to the RodZ family.

The protein resides in the cell inner membrane. Functionally, cytoskeletal protein that is involved in cell-shape control through regulation of the length of the long axis. The chain is Cytoskeleton protein RodZ from Serratia proteamaculans (strain 568).